A 585-amino-acid polypeptide reads, in one-letter code: Aspartate--tRNA(Asp/Asn) ligase (585 aa).

Glu-173 provides a ligand contact to L-aspartate. Positions 197 to 200 are aspartate; that stretch reads QLFK. Arg-219 provides a ligand contact to L-aspartate. ATP contacts are provided by residues 219–221 and Gln-228; that span reads RDE. Residue His-447 participates in L-aspartate binding. Glu-477 contacts ATP. Arg-484 is a binding site for L-aspartate. Position 529 to 532 (529 to 532) interacts with ATP; it reads GFDR.

This sequence belongs to the class-II aminoacyl-tRNA synthetase family. Type 1 subfamily. Homodimer.

It localises to the cytoplasm. The catalysed reaction is tRNA(Asx) + L-aspartate + ATP = L-aspartyl-tRNA(Asx) + AMP + diphosphate. Its function is as follows. Aspartyl-tRNA synthetase with relaxed tRNA specificity since it is able to aspartylate not only its cognate tRNA(Asp) but also tRNA(Asn). Reaction proceeds in two steps: L-aspartate is first activated by ATP to form Asp-AMP and then transferred to the acceptor end of tRNA(Asp/Asn). The protein is Aspartate--tRNA(Asp/Asn) ligase of Campylobacter concisus (strain 13826).